The following is a 185-amino-acid chain: ATP-dependent protease subunit HslV (185 aa).

Thr-14 is an active-site residue. Ala-168, Cys-171, and Thr-174 together coordinate Na(+).

This sequence belongs to the peptidase T1B family. HslV subfamily. A double ring-shaped homohexamer of HslV is capped on each side by a ring-shaped HslU homohexamer. The assembly of the HslU/HslV complex is dependent on binding of ATP.

Its subcellular location is the cytoplasm. It carries out the reaction ATP-dependent cleavage of peptide bonds with broad specificity.. Allosterically activated by HslU binding. Its function is as follows. Protease subunit of a proteasome-like degradation complex believed to be a general protein degrading machinery. This Hyphomonas neptunium (strain ATCC 15444) protein is ATP-dependent protease subunit HslV.